Consider the following 443-residue polypeptide: Ribulose bisphosphate carboxylase large chain (443 aa).

The substrate site is built by Asn-89 and Thr-139. Lys-141 functions as the Proton acceptor in the catalytic mechanism. Lys-143 contacts substrate. Mg(2+) contacts are provided by Lys-167, Asp-169, and Glu-170. Residue Lys-167 is modified to N6-carboxylysine. The active-site Proton acceptor is His-260. Substrate-binding residues include Arg-261, His-293, and Ser-345.

The protein belongs to the RuBisCO large chain family. Type I subfamily. Heterohexadecamer of 8 large chains and 8 small chains; disulfide-linked. The disulfide link is formed within the large subunit homodimers. Mg(2+) is required as a cofactor. The disulfide bond which can form in the large chain dimeric partners within the hexadecamer appears to be associated with oxidative stress and protein turnover.

The protein localises to the plastid. The protein resides in the chloroplast. It carries out the reaction 2 (2R)-3-phosphoglycerate + 2 H(+) = D-ribulose 1,5-bisphosphate + CO2 + H2O. The enzyme catalyses D-ribulose 1,5-bisphosphate + O2 = 2-phosphoglycolate + (2R)-3-phosphoglycerate + 2 H(+). RuBisCO catalyzes two reactions: the carboxylation of D-ribulose 1,5-bisphosphate, the primary event in carbon dioxide fixation, as well as the oxidative fragmentation of the pentose substrate in the photorespiration process. Both reactions occur simultaneously and in competition at the same active site. The polypeptide is Ribulose bisphosphate carboxylase large chain (Callitriche heterophylla (Large water-starwort)).